Consider the following 245-residue polypeptide: Photosystem II protein PSBS1 (245 aa).

Residues 1 to 25 (MAMTLSTKAFAQRGVSARKNTVRVY) constitute a chloroplast transit peptide. 4 helical membrane-spanning segments follow: residues 72–92 (LFVGRLAMVGFSASLIGEILT), 108–128 (GIEVDGLVIGLIAFNLIAAVL), 185–205 (LGFAFSLIGEAVTGKGALAQF), and 217–237 (EFGLVVFILFLLFAAINEGSG).

It belongs to the ELIP/psbS family.

The protein resides in the plastid. It is found in the chloroplast thylakoid membrane. Its function is as follows. Required for non-photochemical quenching (NPQ), a mechanism that converts and dissipates the harmful excess absorbed light energy into heat and protect the photosynthetic apparatus from photo-oxidative damage. Seems involved in the activation of NPQ, possibly by promoting conformational changes required for activation of LHCSR3-dependent quenching in the antenna of photosystem II (PSII). The protein is Photosystem II protein PSBS1 of Chlamydomonas reinhardtii (Chlamydomonas smithii).